The sequence spans 509 residues: L-aspartate oxidase (509 aa).

FAD is bound by residues 14–17 (SGIA), 45–52 (STDWAQGG), and D214. The Proton donor/acceptor role is filled by R279. Residues E358 and 374–375 (SL) each bind FAD. 2 disordered regions span residues 389 to 412 (AAGDDRAPAPSEPPELRDRDPDLP) and 486 to 509 (NPESAGCHHRSDEAAAEEAPDAGH). Residues 402–412 (PELRDRDPDLP) are compositionally biased toward basic and acidic residues. Residues 499-509 (AAAEEAPDAGH) are compositionally biased toward acidic residues.

It belongs to the FAD-dependent oxidoreductase 2 family. NadB subfamily. The cofactor is FAD.

The protein resides in the cytoplasm. The catalysed reaction is L-aspartate + O2 = iminosuccinate + H2O2. It functions in the pathway cofactor biosynthesis; NAD(+) biosynthesis; iminoaspartate from L-aspartate (oxidase route): step 1/1. Functionally, catalyzes the oxidation of L-aspartate to iminoaspartate, the first step in the de novo biosynthesis of NAD(+). This is L-aspartate oxidase (nadB) from Halobacterium salinarum (strain ATCC 700922 / JCM 11081 / NRC-1) (Halobacterium halobium).